Reading from the N-terminus, the 390-residue chain is uncharacterized protein (390 aa).

In terms of domain architecture, Glutaredoxin spans 215 to 325 (SRFKRKTLGK…KLIKDCEMVE (111 aa)).

This is an uncharacterized protein from Arabidopsis thaliana (Mouse-ear cress).